The following is a 347-amino-acid chain: Dihydroorotase (347 aa).

Residues His13 and His15 each coordinate Zn(2+). Substrate-binding positions include 15-17 (HLR) and Asn41. Zn(2+) contacts are provided by Lys99, His136, and His174. The residue at position 99 (Lys99) is an N6-carboxylysine. His136 contributes to the substrate binding site. Leu219 serves as a coordination point for substrate. Asp247 lines the Zn(2+) pocket. Asp247 is an active-site residue. His251 and Ala263 together coordinate substrate.

Belongs to the metallo-dependent hydrolases superfamily. DHOase family. Class II DHOase subfamily. Homodimer. Zn(2+) is required as a cofactor.

It carries out the reaction (S)-dihydroorotate + H2O = N-carbamoyl-L-aspartate + H(+). It participates in pyrimidine metabolism; UMP biosynthesis via de novo pathway; (S)-dihydroorotate from bicarbonate: step 3/3. In terms of biological role, catalyzes the reversible cyclization of carbamoyl aspartate to dihydroorotate. The protein is Dihydroorotase of Rhizobium meliloti (strain 1021) (Ensifer meliloti).